We begin with the raw amino-acid sequence, 289 residues long: Cyclo(L-tyrosyl-L-tyrosyl) synthase (289 aa).

Positions 1-48 are disordered; that stretch reads MSYVAAEPGVLISPTDDLQSPRSAPAAHDENADGITGGTRDDSAPNSR. S88 (nucleophile) is an active-site residue. Substrate-binding positions include N91, 229 to 233, and Y253; that span reads YICAE.

This sequence belongs to the CDPS family. Homodimer.

The enzyme catalyses 2 L-tyrosyl-tRNA(Tyr) = cyclo(L-tyrosyl-L-tyrosyl) + 2 tRNA(Tyr). In terms of biological role, involved in the biosynthesis of mycocyclosin. It uses activated amino acids in the form of aminoacyl-tRNAs (aa-tRNAs) as substrates to catalyze the ATP-independent formation of cyclodipeptides which are intermediates in diketopiperazine (DKP) biosynthetic pathways. Catalyzes the formation of cyclo(L-Tyr-L-Tyr) (cYY) from L-tyrosyl-tRNA(Tyr). In Mycobacterium tuberculosis (strain CDC 1551 / Oshkosh), this protein is Cyclo(L-tyrosyl-L-tyrosyl) synthase.